We begin with the raw amino-acid sequence, 693 residues long: Follicle-stimulating hormone receptor (693 aa).

Positions 1–18 (MFLVFTCSLILLASCSSC) are cleaved as a signal peptide. 2 cysteine pairs are disulfide-bonded: Cys18–Cys25 and Cys23–Cys32. Positions 19–46 (QHHTCHCAGRIFICQESKVVQLPRDIPT) constitute an LRRNT domain. Over 19–366 (QHHTCHCAGR…EDIMGYTILR (348 aa)) the chain is Extracellular. Residue Asn47 is glycosylated (N-linked (GlcNAc...) asparagine). LRR repeat units follow at residues 49-72 (TELRFVLTKMRVIPKGAFAGLLDL), 73-97 (EKIEISQNDALEVIEAKVFSNLPKL), 98-118 (HEIRIEKANNLVYIDQDAFQH), 119-143 (LPSLRYLLISNTGLRFLPVVQKVHS), 144-169 (FQKVLLDIQDNINIRTIERNSFMGLS), 170-192 (SESVILWLNKNGIQEIENHAFNG), 193-216 (TYLDELNLSDNQNLEKLPNEVFQG), 217-240 (ANGPVVLDISRTKISFLPGHGLEL), and 241-259 (IKKLRARSTYNLKKLPDLS). Asn191 and Asn199 each carry an N-linked (GlcNAc...) asparagine glycan. N-linked (GlcNAc...) asparagine glycosylation is present at Asn268. 4 disulfides stabilise this stretch: Cys275/Cys346, Cys276/Cys292, Cys276/Cys356, and Cys292/Cys338. Residues 367 to 387 (VLIWFISILAITGNIVVLIIL) traverse the membrane as a helical segment. Residues 388-398 (ISSQYKLTVPR) are Cytoplasmic-facing. The chain crosses the membrane as a helical span at residues 399–421 (FLMCNLAFADLCIGIYLLFIASV). Over 422 to 443 (DIQTKSQYYNYAIDWQTGAGCN) the chain is Extracellular. A disulfide bridge connects residues Cys442 and Cys517. A helical membrane pass occupies residues 444–465 (AAGFFTVFASELSVYTLTVITL). The Cytoplasmic segment spans residues 466–485 (ERWHTITYAMQLDRKVRFRH). The chain crosses the membrane as a helical span at residues 486-508 (AVIIMIFGWMFAFTVALLPIFGV). Over 509 to 528 (SSYMKVSICLPMDIETPFSQ) the chain is Extracellular. The helical transmembrane segment at 529-550 (AYVIFLLVLNVLAFVIICACYI) threads the bilayer. Over 551–573 (CIYFTVRNPNVISSNSDTKIAKR) the chain is Cytoplasmic. A helical transmembrane segment spans residues 574–597 (MAILIFTDFLCMAPISFFAISASL). Over 598-608 (KVPLITVSKSK) the chain is Extracellular. Residues 609–630 (ILLVLFYPINSCANPFLYAIFT) form a helical membrane-spanning segment. Residues 631-693 (KTFRRDFFIL…YSLVPLNHLN (63 aa)) are Cytoplasmic-facing.

It belongs to the G-protein coupled receptor 1 family. FSH/LSH/TSH subfamily. Homotrimer. Functions as a homotrimer binding the FSH hormone heterodimer composed of CGA and FSHB.

It localises to the cell membrane. Functionally, g protein-coupled receptor for follitropin, the follicle-stimulating hormone. Through cAMP production activates the downstream PI3K-AKT and ERK1/ERK2 signaling pathways. The sequence is that of Follicle-stimulating hormone receptor (FSHR) from Cairina moschata (Muscovy duck).